A 148-amino-acid chain; its full sequence is Photosystem I reaction center subunit XI (148 aa).

3 helical membrane-spanning segments follow: residues 48 to 68, 73 to 93, and 122 to 142; these read LEIGLAHGYFLIGPFAQLGPL, IGLLAGFLSTIGLILILTLGL, and GGFFVGACGSAGFAFICLSSI.

The protein belongs to the PsaL family.

The protein localises to the plastid. The protein resides in the chloroplast thylakoid membrane. The sequence is that of Photosystem I reaction center subunit XI from Thalassiosira pseudonana (Marine diatom).